The primary structure comprises 1725 residues: Latrophilin Cirl (1725 aa).

Over 1-757 the chain is Extracellular; it reads MALNELGNCA…LFTMFDGNMR (757 aa). Residues 18–107 form the SUEL-type lectin domain; sequence ACEGKQLTIE…KYLEAHYQCI (90 aa). Asn-135 carries N-linked (GlcNAc...) asparagine glycosylation. The disordered stretch occupies residues 164–284; that stretch reads AVQPTHSTPS…SAANNSVNIG (121 aa). Composition is skewed to low complexity over residues 167–176 and 224–236; these read PTHSTPSSST and SSSSSSNSGSAGN. Residues Asn-236, Asn-278, Asn-326, Asn-388, Asn-645, Asn-693, and Asn-720 are each glycosylated (N-linked (GlcNAc...) asparagine). Over residues 259–282 the composition is skewed to polar residues; sequence LLTTKSSPNRTPGTTASAANNSVN. Residues 361 to 390 form a disordered region; sequence DDEYDDDLPAASSTTPQPSNNGGDCVHNSS. Residues 371-390 are compositionally biased toward polar residues; that stretch reads ASSTTPQPSNNGGDCVHNSS. The region spanning 551–744 is the GAIN-B domain; sequence RNVVQKVKNI…AILMDVVDEH (194 aa). 2 cysteine pairs are disulfide-bonded: Cys-699/Cys-726 and Cys-714/Cys-728. Residues 699 to 744 form a GPS region; that stretch reads CVFWNYIDHAWSANGCSLESTNRTHSVCSCNHLTNFAILMDVVDEH. Residues 758 to 778 form a helical membrane-spanning segment; it reads IFIYISVAICVVFIIIALLTL. Topologically, residues 779 to 791 are cytoplasmic; sequence KLFNGVFVKSART. The helical transmembrane segment at 792 to 812 threads the bilayer; it reads SIYSSIYICLLAIELLFLLGI. The Extracellular segment spans residues 813 to 818; that stretch reads EQTETS. A helical transmembrane segment spans residues 819–839; it reads IFCGFITVFLHCAILSGTAWF. Residues 840-865 are Cytoplasmic-facing; sequence CYEAFHSYSTLTSDELLLEVDQTPKV. Residues 866-886 form a helical membrane-spanning segment; that stretch reads NCYYLLSYGLSLSVVAISLVI. Topologically, residues 887-910 are extracellular; sequence DPSTYTQNDYCVLMEANALFYSTF. A helical membrane pass occupies residues 911–931; that stretch reads VAPVLIFFVAAITYTFLSWII. Residues 932 to 958 lie on the Cytoplasmic side of the membrane; that stretch reads MRRKSRTALKTKEHTRLANVRFDIRCS. A helical membrane pass occupies residues 959–979; the sequence is FVFLLLLSVVWCCAYFYLRGA. Residues 980–986 are Extracellular-facing; the sequence is KLDEDGA. Residues 987–1007 traverse the membrane as a helical segment; the sequence is PIYGYCFICFNTLLGIYIFVF. Over 1008 to 1725 the chain is Cytoplasmic; sequence HCIQNEKIRR…VRCYLEPLAK (718 aa). The tract at residues 1056 to 1088 is disordered; it reads TANQSAGTLSKSKSKLPLGAGDEARDGDAQQQQ. Ser-1153 carries the post-translational modification Phosphoserine. Disordered regions lie at residues 1236-1263, 1309-1337, 1472-1555, and 1636-1705; these read HNNQHGKKKRGGGAGAVPASPSGSLHSR, QQLQQQQLRQQRQQQQQQLSSDEEQAEQH, GGGS…SDER, and LFGH…QARH. Basic residues predominate over residues 1237 to 1246; sequence NNQHGKKKRG. 2 positions are modified to phosphoserine: Ser-1255 and Ser-1262. Residues 1309 to 1327 show a composition bias toward low complexity; that stretch reads QQLQQQQLRQQRQQQQQQL. Phosphoserine occurs at positions 1328 and 1329. Residues 1478 to 1496 show a composition bias toward low complexity; it reads GGSVTSRSQQQQQQQLKQK. Acidic residues-rich tracts occupy residues 1505–1522 and 1532–1543; these read DDDDDDDDDDDEYDDEVT and CDDEDNESDIDD. Polar residues predominate over residues 1651–1666; sequence QTPAQKRQQLQKLSPQ. The span at 1667 to 1683 shows a compositional bias: low complexity; that stretch reads STTSSSSHTSHSNPQHA. A compositionally biased stretch (basic residues) spans 1684-1693; that stretch reads PAHHLQHHHT. The span at 1694-1705 shows a compositional bias: low complexity; the sequence is QQQQQQQQQARH.

This sequence belongs to the G-protein coupled receptor 2 family. LN-TM7 subfamily. In terms of assembly, forms a heterodimer, consisting of a large extracellular region non-covalently linked to a seven-transmembrane moiety. Post-translationally, proteolytically cleaved into 2 subunits, an extracellular subunit and a seven-transmembrane subunit.

The protein localises to the cell membrane. This Drosophila mojavensis (Fruit fly) protein is Latrophilin Cirl.